A 334-amino-acid polypeptide reads, in one-letter code: UDP-N-acetylglucosamine--N-acetylmuramyl-(pentapeptide) pyrophosphoryl-undecaprenol N-acetylglucosamine transferase (334 aa).

UDP-N-acetyl-alpha-D-glucosamine contacts are provided by residues 11-13 (TGG), N125, S185, I229, and Q274.

It belongs to the glycosyltransferase 28 family. MurG subfamily.

Its subcellular location is the cell inner membrane. It carries out the reaction di-trans,octa-cis-undecaprenyl diphospho-N-acetyl-alpha-D-muramoyl-L-alanyl-D-glutamyl-meso-2,6-diaminopimeloyl-D-alanyl-D-alanine + UDP-N-acetyl-alpha-D-glucosamine = di-trans,octa-cis-undecaprenyl diphospho-[N-acetyl-alpha-D-glucosaminyl-(1-&gt;4)]-N-acetyl-alpha-D-muramoyl-L-alanyl-D-glutamyl-meso-2,6-diaminopimeloyl-D-alanyl-D-alanine + UDP + H(+). Its pathway is cell wall biogenesis; peptidoglycan biosynthesis. Its function is as follows. Cell wall formation. Catalyzes the transfer of a GlcNAc subunit on undecaprenyl-pyrophosphoryl-MurNAc-pentapeptide (lipid intermediate I) to form undecaprenyl-pyrophosphoryl-MurNAc-(pentapeptide)GlcNAc (lipid intermediate II). This is UDP-N-acetylglucosamine--N-acetylmuramyl-(pentapeptide) pyrophosphoryl-undecaprenol N-acetylglucosamine transferase from Thermosipho africanus (strain TCF52B).